The sequence spans 429 residues: Phenylalanine--tRNA ligase, chloroplastic/mitochondrial (429 aa).

A chloroplast and mitochondrion-targeting transit peptide spans 1–53 (MTVFSVQSTIFSRASVALLSSNGFKRFSFVSSFSSSAAYSPPKMRKRRYPIVS). An N-acetylalanine modification is found at Ala-54. Residues 163 to 166 (SAHQ), Arg-185, 192 to 194 (THY), 199 to 201 (QME), Glu-269, and Phe-294 each bind substrate. The 92-residue stretch at 338 to 429 (SKYPPCYKDI…VQKKLNVELR (92 aa)) folds into the FDX-ACB domain.

Belongs to the class-II aminoacyl-tRNA synthetase family. In terms of assembly, monomer.

The protein localises to the plastid. The protein resides in the chloroplast stroma. It is found in the mitochondrion matrix. It catalyses the reaction tRNA(Phe) + L-phenylalanine + ATP = L-phenylalanyl-tRNA(Phe) + AMP + diphosphate + H(+). Its function is as follows. Is responsible for the charging of tRNA(Phe) with phenylalanine in mitochondrial translation. The polypeptide is Phenylalanine--tRNA ligase, chloroplastic/mitochondrial (Arabidopsis thaliana (Mouse-ear cress)).